A 309-amino-acid chain; its full sequence is Transaldolase (309 aa).

Lys-125 serves as the catalytic Schiff-base intermediate with substrate.

It belongs to the transaldolase family. Type 1 subfamily. Homodimer.

It is found in the cytoplasm. It carries out the reaction D-sedoheptulose 7-phosphate + D-glyceraldehyde 3-phosphate = D-erythrose 4-phosphate + beta-D-fructose 6-phosphate. It functions in the pathway carbohydrate degradation; pentose phosphate pathway; D-glyceraldehyde 3-phosphate and beta-D-fructose 6-phosphate from D-ribose 5-phosphate and D-xylulose 5-phosphate (non-oxidative stage): step 2/3. Its function is as follows. Transaldolase is important for the balance of metabolites in the pentose-phosphate pathway. The chain is Transaldolase from Pseudomonas syringae pv. tomato (strain ATCC BAA-871 / DC3000).